Consider the following 244-residue polypeptide: Ribonuclease 3 2 (244 aa).

The RNase III domain occupies 11–136 (LKALLRRLGL…LLGALYLSVG (126 aa)). Glutamate 50 lines the Mg(2+) pocket. Residue aspartate 54 is part of the active site. Aspartate 122 and glutamate 125 together coordinate Mg(2+). Residue glutamate 125 is part of the active site. One can recognise a DRBM domain in the interval 164–234 (NYKEALQAWT…AQQAYQDFIA (71 aa)).

Belongs to the ribonuclease III family. In terms of assembly, homodimer. The cofactor is Mg(2+).

It localises to the cytoplasm. It carries out the reaction Endonucleolytic cleavage to 5'-phosphomonoester.. Digests double-stranded RNA. Involved in the processing of primary rRNA transcript to yield the immediate precursors to the large and small rRNAs (23S and 16S). Processes some mRNAs, and tRNAs when they are encoded in the rRNA operon. Processes pre-crRNA and tracrRNA of type II CRISPR loci if present in the organism. This chain is Ribonuclease 3 2, found in Synechocystis sp. (strain ATCC 27184 / PCC 6803 / Kazusa).